The sequence spans 1164 residues: MALFPAFAGLSEAPDGGSSRKELDWLSNPSFCVGSITSLSQQTEAAPAHVSEGLPLTRSHLKSESSDESDTNKKLKQTSRKKKKEKKKKRKHQHHKKTKRKHGPSSSSRSETDTDSEKDKPSRGVGGSKKESEEPNQGNNAAADTGHRFVWLEDIQAVTGETFRTDKKPDPANWEYKSLYRGDIARYKRKGDSCLGINPKKQCISWEGTSTEKKHSRKQVERYFTKKSVGLMNIDGVAISSKTEPPSSEPISFIPVKDLEDAAPVTTWLNPLGIYDQSTTHWLQGQGPPEQESKQPDAQPDSESAALKAKVEEFNRRVRENPRDTQLWMAFVAFQDEVMKSPGLYAIEEGEQEKRKRSLKLILEKKLAILERAIESNQSSVDLKLAKLKLCTEFWEPSTLVKEWQKLIFLHPNNTALWQKYLLFCQSQFSTFSISKIHSLYGKCLSTLSAVKDGSILSHPALPGTEEAMFALFLQQCHFLRQAGHSEKAISLFQAMVDFTFFKPDSVKDLPTKGQVEFFEPFWDSGEPRAGEKGARGWKAWMHQQERGGWVVINPDEDDDEPEEDDQEIKDKTLPRWQIWLAAERSRDQRHWRPWRPDKTKKQTEEDCEDPERQVLFDDIGQSLIRLSSHDLQFQLVEAFLQFLGVPSGFTPPASCLYLAMDENSIFDNGLYDEKPLTFFNPLFSGASCVGRMDRLGYPRWTRGQNREGEEFIRNVFHLVMPLFSGKEKSQLCFSWLQYEIAKVIWCLHTKNKKRLKSQGKNCKKLAKNLLKEPENCNNFCLWKQYAHLEWLLGNTEDARKVFDTALGMAGSRELKDSDLCELSLLYAELEVELSPEVRRAATARAVHILTKLTESSPYGPYTGQVLAVHILKARKAYEHALQDCLGDSCVSNPAPTDSCSRLISLAKCFMLFQYLTIGIDAAVQIYEQVFAKLNSSVFPEGSGEGDSASSQSWTSVLEAITLMHTSLLRFHMKVSVYPLAPLREALSQALKLYPGNQVLWRSYVQIQNKSHSASKTRRFFDTITRSAKPLEPWLFAIEAEKLRKRLVETVQRLDGREIHATIPETGLMHRIQALFENAMRSDSGSQCPLLWRMYLNFLVSLGNKERSKGVFYKALQNCPWAKVLYLDAVEYFPDEMQEILDLMTEKELRVRLPLEELELLLED.

Disordered stretches follow at residues 1 to 25 (MALF…ELDW) and 39 to 149 (LSQQ…GHRF). Ala2 bears the N-acetylalanine mark. Residues 61–73 (LKSESSDESDTNK) are compositionally biased toward basic and acidic residues. Residues 61-383 (LKSESSDESD…IESNQSSVDL (323 aa)) are a coiled coil. The span at 74 to 103 (KLKQTSRKKKKEKKKKRKHQHHKKTKRKHG) shows a compositional bias: basic residues. Residues 110–133 (SETDTDSEKDKPSRGVGGSKKESE) are compositionally biased toward basic and acidic residues. The interval 163–266 (FRTDKKPDPA…KDLEDAAPVT (104 aa)) is MID/MTR4-interacting domain. Positions 279 to 305 (TTHWLQGQGPPEQESKQPDAQPDSESA) are disordered. HAT repeat units follow at residues 305–337 (AALK…FQDE), 395–427 (WEPS…FCQS), 758–792 (SQGK…LEWL), 978–1010 (YPLA…IQNK), and 1067–1101 (GLMH…FLVS).

It belongs to the NRDE2 family. In terms of assembly, interacts with MTREX; the interaction is direct and stabilizes NRDE2. Interacts with EXOSC10, EFTUD2 and EIF4A3.

Its subcellular location is the nucleus speckle. The protein localises to the nucleus. The protein resides in the nucleolus. It is found in the nucleoplasm. Its function is as follows. Protein of the nuclear speckles that regulates RNA degradation and export from the nucleus through its interaction with MTREX an essential factor directing various RNAs to exosomal degradation. Changes the conformation of MTREX, precluding its association with the nuclear exosome and interaction with proteins required for its function in RNA exosomal degradation. Negatively regulates, for instance, the degradation of mRNAs and lncRNAs by inhibiting their MTREX-mediated recruitment to nuclear exosome. By preventing the degradation of RNAs in the nucleus, it promotes their export to the cytoplasm. U5 snRNP-associated RNA splicing factor which is required for efficient splicing of CEP131 pre-mRNA and plays an important role in centrosome maturation, integrity and function during mitosis. Suppresses intron retention in a subset of pre-mRNAs containing short, GC-rich introns with relatively weak 5' and 3' splice sites. Plays a role in DNA damage response. In Homo sapiens (Human), this protein is Nuclear exosome regulator NRDE2.